A 456-amino-acid chain; its full sequence is Exodeoxyribonuclease 7 large subunit (456 aa).

The protein belongs to the XseA family. In terms of assembly, heterooligomer composed of large and small subunits.

The protein resides in the cytoplasm. It carries out the reaction Exonucleolytic cleavage in either 5'- to 3'- or 3'- to 5'-direction to yield nucleoside 5'-phosphates.. Its function is as follows. Bidirectionally degrades single-stranded DNA into large acid-insoluble oligonucleotides, which are then degraded further into small acid-soluble oligonucleotides. In Shigella flexneri serotype 5b (strain 8401), this protein is Exodeoxyribonuclease 7 large subunit.